Consider the following 146-residue polypeptide: 3-hydroxyacyl-[acyl-carrier-protein] dehydratase FabZ (146 aa).

The active site involves histidine 49.

Belongs to the thioester dehydratase family. FabZ subfamily.

The protein resides in the cytoplasm. It catalyses the reaction a (3R)-hydroxyacyl-[ACP] = a (2E)-enoyl-[ACP] + H2O. Its function is as follows. Involved in unsaturated fatty acids biosynthesis. Catalyzes the dehydration of short chain beta-hydroxyacyl-ACPs and long chain saturated and unsaturated beta-hydroxyacyl-ACPs. This chain is 3-hydroxyacyl-[acyl-carrier-protein] dehydratase FabZ, found in Ectopseudomonas mendocina (strain ymp) (Pseudomonas mendocina).